The following is a 392-amino-acid chain: Chorismate synthase (392 aa).

Positions 40 and 46 each coordinate NADP(+). FMN-binding positions include 135-137 (RAS), 256-257 (QA), glycine 300, 315-319 (KPIST), and arginine 341.

Belongs to the chorismate synthase family. Homotetramer. FMNH2 is required as a cofactor.

It catalyses the reaction 5-O-(1-carboxyvinyl)-3-phosphoshikimate = chorismate + phosphate. It participates in metabolic intermediate biosynthesis; chorismate biosynthesis; chorismate from D-erythrose 4-phosphate and phosphoenolpyruvate: step 7/7. Catalyzes the anti-1,4-elimination of the C-3 phosphate and the C-6 proR hydrogen from 5-enolpyruvylshikimate-3-phosphate (EPSP) to yield chorismate, which is the branch point compound that serves as the starting substrate for the three terminal pathways of aromatic amino acid biosynthesis. This reaction introduces a second double bond into the aromatic ring system. The chain is Chorismate synthase from Acidothermus cellulolyticus (strain ATCC 43068 / DSM 8971 / 11B).